The chain runs to 300 residues: Cation-efflux pump FieF (300 aa).

Transmembrane regions (helical) follow at residues 12–32 (AALA…FAWW), 39–59 (ILAA…NLLV), 82–102 (AALA…LTGI), and 114–134 (PLVG…LVTF). Zn(2+) contacts are provided by D45 and D49. Residues H153 and D157 each coordinate Zn(2+). 2 helical membrane passes run 156–176 (SDVM…YGLH) and 182–202 (FALG…YEAI).

It belongs to the cation diffusion facilitator (CDF) transporter (TC 2.A.4) family. FieF subfamily. As to quaternary structure, homodimer.

It is found in the cell inner membrane. The enzyme catalyses Zn(2+)(in) + H(+)(out) = Zn(2+)(out) + H(+)(in). It carries out the reaction Cd(2+)(in) + H(+)(out) = Cd(2+)(out) + H(+)(in). It catalyses the reaction Fe(2+)(in) + H(+)(out) = Fe(2+)(out) + H(+)(in). In terms of biological role, divalent metal cation transporter which exports Zn(2+), Cd(2+) and possibly Fe(2+). May be involved in zinc and iron detoxification by efflux. This chain is Cation-efflux pump FieF, found in Cronobacter sakazakii (strain ATCC BAA-894) (Enterobacter sakazakii).